Reading from the N-terminus, the 483-residue chain is ATP-dependent RNA helicase DDX25 (483 aa).

A Nuclear export signal motif is present at residues 61–74 (LAANSLLNKLIRQS). Residues 97–125 (KTFEELRLKEELLKGIYAMGFNRPSKIQE) carry the Q motif motif. The Nuclear localization signal motif lies at 100–114 (EELRLKEELLKGIYA). The Helicase ATP-binding domain occupies 130–300 (MMLAHPPQNL…ERIIPDPNVI (171 aa)). 143–150 (SQSGTGKT) provides a ligand contact to ATP. Residues 247–250 (DEAD) carry the DEAD box motif. In terms of domain architecture, Helicase C-terminal spans 311–478 (NIRQYYVLCG…QLDPEDMDEI (168 aa)).

Belongs to the DEAD box helicase family. Phosphorylated on threonine residues. The phosphorylated form is found in the cytoplasm but not in the nucleus.

The protein localises to the cytoplasm. The protein resides in the nucleus. The catalysed reaction is ATP + H2O = ADP + phosphate + H(+). ATP-dependent RNA helicase. Required for mRNA export and translation regulation during spermatid development. The chain is ATP-dependent RNA helicase DDX25 (DDX25) from Bos taurus (Bovine).